A 223-amino-acid chain; its full sequence is N-acetylmuramate alpha-1-phosphate uridylyltransferase (223 aa).

Residues 11-13 (GER) and lysine 23 contribute to the UTP site. Substrate is bound at residue asparagine 105. A Mg(2+)-binding site is contributed by aspartate 107. 2 residues coordinate substrate: aspartate 140 and aspartate 205. Aspartate 205 is a Mg(2+) binding site.

This sequence belongs to the nucleotidyltransferase MurU family. In terms of assembly, monomer. Mg(2+) serves as cofactor.

The enzyme catalyses N-acetyl-alpha-D-muramate 1-phosphate + UDP + H(+) = UDP-N-acetyl-alpha-D-muramate + phosphate. Its pathway is cell wall biogenesis; peptidoglycan recycling. Its activity is regulated as follows. Is completely inhibited by EDTA in vitro. Its function is as follows. Catalyzes the formation of UDP-N-acetylmuramate (UDP-MurNAc), a crucial precursor of the bacterial peptidoglycan cell wall, from UTP and MurNAc-alpha-1P. Is involved in peptidoglycan recycling as part of a cell wall recycling pathway that bypasses de novo biosynthesis of the peptidoglycan precursor UDP-MurNAc. Plays a role in intrinsic resistance to fosfomycin, which targets the de novo synthesis of UDP-MurNAc. Is not able to use GlcNAc-alpha-1P and GalNAc-alpha-1P as substrates. Cannot accept other nucleotide triphosphates (ATP, CTP, TTP, or GTP) than UTP. The polypeptide is N-acetylmuramate alpha-1-phosphate uridylyltransferase (Pseudomonas putida (strain ATCC 47054 / DSM 6125 / CFBP 8728 / NCIMB 11950 / KT2440)).